A 146-amino-acid polypeptide reads, in one-letter code: Hemoglobin subunit beta (146 aa).

The Globin domain occupies 2–146; the sequence is HWTAEEKQLI…VAHALARKYH (145 aa). Histidine 63 and histidine 92 together coordinate heme b.

This sequence belongs to the globin family. Heterotetramer of two alpha chains and two beta chains. As to expression, red blood cells.

Involved in oxygen transport from the lung to the various peripheral tissues. In Aegypius monachus (Cinereous vulture), this protein is Hemoglobin subunit beta (HBB).